The primary structure comprises 93 residues: Acylphosphatase (93 aa).

In terms of domain architecture, Acylphosphatase-like spans 5–93 (AKQIVVRGRV…PNFRGFQVTG (89 aa)). Residues arginine 20 and asparagine 38 contribute to the active site.

Belongs to the acylphosphatase family.

The catalysed reaction is an acyl phosphate + H2O = a carboxylate + phosphate + H(+). In Lacticaseibacillus paracasei (strain ATCC 334 / BCRC 17002 / CCUG 31169 / CIP 107868 / KCTC 3260 / NRRL B-441) (Lactobacillus paracasei), this protein is Acylphosphatase (acyP).